The primary structure comprises 184 residues: Ribosome-recycling factor (184 aa).

Belongs to the RRF family.

The protein resides in the cytoplasm. Functionally, responsible for the release of ribosomes from messenger RNA at the termination of protein biosynthesis. May increase the efficiency of translation by recycling ribosomes from one round of translation to another. The polypeptide is Ribosome-recycling factor (Clostridium botulinum (strain Okra / Type B1)).